Reading from the N-terminus, the 209-residue chain is Kynurenine formamidase (209 aa).

Residue tryptophan 20 coordinates substrate. Zn(2+) is bound by residues histidine 50, histidine 54, and aspartate 56. Histidine 60 functions as the Proton donor/acceptor in the catalytic mechanism. Zn(2+) is bound by residues histidine 161 and glutamate 173.

This sequence belongs to the Cyclase 1 superfamily. KynB family. In terms of assembly, homodimer. Requires Zn(2+) as cofactor.

The catalysed reaction is N-formyl-L-kynurenine + H2O = L-kynurenine + formate + H(+). Its pathway is amino-acid degradation; L-tryptophan degradation via kynurenine pathway; L-kynurenine from L-tryptophan: step 2/2. In terms of biological role, catalyzes the hydrolysis of N-formyl-L-kynurenine to L-kynurenine, the second step in the kynurenine pathway of tryptophan degradation. This chain is Kynurenine formamidase, found in Bacillus cereus (strain ATCC 14579 / DSM 31 / CCUG 7414 / JCM 2152 / NBRC 15305 / NCIMB 9373 / NCTC 2599 / NRRL B-3711).